The primary structure comprises 472 residues: tRNA(Ile)-lysidine synthase (472 aa).

25–30 is a binding site for ATP; the sequence is SGGPDS.

Belongs to the tRNA(Ile)-lysidine synthase family.

Its subcellular location is the cytoplasm. The catalysed reaction is cytidine(34) in tRNA(Ile2) + L-lysine + ATP = lysidine(34) in tRNA(Ile2) + AMP + diphosphate + H(+). Functionally, ligates lysine onto the cytidine present at position 34 of the AUA codon-specific tRNA(Ile) that contains the anticodon CAU, in an ATP-dependent manner. Cytidine is converted to lysidine, thus changing the amino acid specificity of the tRNA from methionine to isoleucine. This is tRNA(Ile)-lysidine synthase (tilS) from Bacillus subtilis (strain 168).